The chain runs to 61 residues: uncharacterized protein (61 aa).

This is an uncharacterized protein from Escherichia coli (strain K12).